A 389-amino-acid polypeptide reads, in one-letter code: Probable dual-specificity RNA methyltransferase RlmN (389 aa).

The tract at residues 1–23 (MTTQHPDTPETGITPGGTSGAFR) is disordered. The active-site Proton acceptor is the E127. In terms of domain architecture, Radical SAM core spans 133 to 376 (YPTRTTLCIS…ATLRDTRGQD (244 aa)). C140 and C381 form a disulfide bridge. Residues C147, C151, and C154 each coordinate [4Fe-4S] cluster. S-adenosyl-L-methionine contacts are provided by residues 202–203 (GE), S236, 259–261 (SLH), and N338. C381 acts as the S-methylcysteine intermediate in catalysis.

Belongs to the radical SAM superfamily. RlmN family. Requires [4Fe-4S] cluster as cofactor.

It is found in the cytoplasm. The enzyme catalyses adenosine(2503) in 23S rRNA + 2 reduced [2Fe-2S]-[ferredoxin] + 2 S-adenosyl-L-methionine = 2-methyladenosine(2503) in 23S rRNA + 5'-deoxyadenosine + L-methionine + 2 oxidized [2Fe-2S]-[ferredoxin] + S-adenosyl-L-homocysteine. It carries out the reaction adenosine(37) in tRNA + 2 reduced [2Fe-2S]-[ferredoxin] + 2 S-adenosyl-L-methionine = 2-methyladenosine(37) in tRNA + 5'-deoxyadenosine + L-methionine + 2 oxidized [2Fe-2S]-[ferredoxin] + S-adenosyl-L-homocysteine. Its function is as follows. Specifically methylates position 2 of adenine 2503 in 23S rRNA and position 2 of adenine 37 in tRNAs. This chain is Probable dual-specificity RNA methyltransferase RlmN, found in Bifidobacterium longum (strain NCC 2705).